A 247-amino-acid chain; its full sequence is Acidic leucine-rich nuclear phosphoprotein 32 family member A (247 aa).

T15 is modified (phosphothreonine). Phosphoserine is present on S17. LRR repeat units lie at residues 18-41 (DVKELVLDNCRSIEGKIEGLTDEF), 43-64 (ELEFLSTINVGLTSISNLPKLN), 65-87 (KLKKLELSENRISGDLEVLAEKC), and 89-110 (NLKHLNLSGNKIKDLSTIEPLK). Residues 123–161 (CEVTNLNAYRENVFKLLPQVMYLDGYDRDNKEAPDSDVE) form the LRRCT domain. The tract at residues 150–172 (RDNKEAPDSDVEGYVEDDDEEDE) is necessary for tumor-suppressive function. The tract at residues 150-247 (RDNKEAPDSD…EPDDEGQEDD (98 aa)) is disordered. Over residues 157–230 (DSDVEGYVED…EDEEDAAEEE (74 aa)) the composition is skewed to acidic residues. A phosphoserine mark is found at S158 and S202. Residues 165–247 (EDDDEEDEDE…EPDDEGQEDD (83 aa)) form an interaction with E4F1 region.

The protein belongs to the ANP32 family. In terms of assembly, component of the SET complex, composed of at least ANP32A, APEX1, HMGB2, NME1, SET and TREX1. Directly interacts with SET. Interacts with ATXN1/SCA1. Interacts with MAP1B. Interacts with ELAVL1. Part of the INHAT (inhibitor of histone acetyltransferases) complex. Interacts with E4F1. Post-translationally, phosphorylated on serine residues, at least in part by casein kinase 2/CK2. In terms of processing, some glutamate residues are glycylated by TTLL8. This modification occurs exclusively on glutamate residues and results in a glycine chain on the gamma-carboxyl group. Widely distributed in the central nervous system, with an abundant expression in the cerebellum.

It localises to the nucleus. Its subcellular location is the cytoplasm. It is found in the endoplasmic reticulum. In terms of biological role, multifunctional protein that is involved in the regulation of many processes including tumor suppression, apoptosis, cell cycle progression or transcription. Promotes apoptosis by favouring the activation of caspase-9/CASP9 and allowing apoptosome formation. In addition, plays a role in the modulation of histone acetylation and transcription as part of the INHAT (inhibitor of histone acetyltransferases) complex. Inhibits the histone-acetyltranferase activity of EP300/CREBBP (CREB-binding protein) and EP300/CREBBP-associated factor by histone masking. Preferentially binds to unmodified histone H3 and sterically inhibiting its acetylation and phosphorylation leading to cell growth inhibition. Participates in other biochemical processes such as regulation of mRNA nuclear-to-cytoplasmic translocation and stability by its association with ELAVL1 (Hu-antigen R). Plays a role in E4F1-mediated transcriptional repression as well as inhibition of protein phosphatase 2A. This is Acidic leucine-rich nuclear phosphoprotein 32 family member A (Anp32a) from Rattus norvegicus (Rat).